An 88-amino-acid chain; its full sequence is Small ribosomal subunit protein uS17 (88 aa).

The protein belongs to the universal ribosomal protein uS17 family. As to quaternary structure, part of the 30S ribosomal subunit.

Functionally, one of the primary rRNA binding proteins, it binds specifically to the 5'-end of 16S ribosomal RNA. The sequence is that of Small ribosomal subunit protein uS17 from Pseudomonas aeruginosa (strain LESB58).